A 139-amino-acid polypeptide reads, in one-letter code: Large ribosomal subunit protein uL16 (139 aa).

The segment covering 1–11 has biased composition (basic residues); sequence MLQPKRTKYRK. Residues 1–30 form a disordered region; the sequence is MLQPKRTKYRKPFLQSHDKRKAHKGNKVSF.

The protein belongs to the universal ribosomal protein uL16 family. Part of the 50S ribosomal subunit.

Binds 23S rRNA and is also seen to make contacts with the A and possibly P site tRNAs. This Mycoplasmopsis synoviae (strain 53) (Mycoplasma synoviae) protein is Large ribosomal subunit protein uL16.